We begin with the raw amino-acid sequence, 249 residues long: 1-(5-phosphoribosyl)-5-[(5-phosphoribosylamino)methylideneamino] imidazole-4-carboxamide isomerase (249 aa).

The Proton acceptor role is filled by aspartate 10. Aspartate 136 serves as the catalytic Proton donor.

It belongs to the HisA/HisF family.

Its subcellular location is the cytoplasm. The enzyme catalyses 1-(5-phospho-beta-D-ribosyl)-5-[(5-phospho-beta-D-ribosylamino)methylideneamino]imidazole-4-carboxamide = 5-[(5-phospho-1-deoxy-D-ribulos-1-ylimino)methylamino]-1-(5-phospho-beta-D-ribosyl)imidazole-4-carboxamide. The protein operates within amino-acid biosynthesis; L-histidine biosynthesis; L-histidine from 5-phospho-alpha-D-ribose 1-diphosphate: step 4/9. This Symbiobacterium thermophilum (strain DSM 24528 / JCM 14929 / IAM 14863 / T) protein is 1-(5-phosphoribosyl)-5-[(5-phosphoribosylamino)methylideneamino] imidazole-4-carboxamide isomerase.